A 303-amino-acid chain; its full sequence is MTASAPAASASARLLDGRRIAEELLDGLKLRVDARLAAGKARPGLAVVLVGGDPASSVYVRNKRRAAEKVGIEAFDYDLPQGTSEAQLASLIDELNADPKIHGILIQLPLPGIPDANRLIQRIDPRKDVDGFHPQNVGHLALREFGLRPCTPRGIVTLLGHTDQPVRGRNATIVGVSNHVGRPMGLELLIAGCTVTSCHKFTPPDVLEASVRNADILVVAVGRPGLIPGEWVKPGAVVIDVGINRLDDGRLVGDVGFDAAAQRAAWITPVPGGVGPMTVATLMQNTIEAADAAESGDSGLGIG.

NADP(+)-binding positions include 175–177 (GVS) and isoleucine 243.

It belongs to the tetrahydrofolate dehydrogenase/cyclohydrolase family. In terms of assembly, homodimer.

The enzyme catalyses (6R)-5,10-methylene-5,6,7,8-tetrahydrofolate + NADP(+) = (6R)-5,10-methenyltetrahydrofolate + NADPH. It carries out the reaction (6R)-5,10-methenyltetrahydrofolate + H2O = (6R)-10-formyltetrahydrofolate + H(+). Its pathway is one-carbon metabolism; tetrahydrofolate interconversion. Its function is as follows. Catalyzes the oxidation of 5,10-methylenetetrahydrofolate to 5,10-methenyltetrahydrofolate and then the hydrolysis of 5,10-methenyltetrahydrofolate to 10-formyltetrahydrofolate. This is Bifunctional protein FolD from Xanthomonas euvesicatoria pv. vesicatoria (strain 85-10) (Xanthomonas campestris pv. vesicatoria).